Reading from the N-terminus, the 213-residue chain is NADH-quinone oxidoreductase subunit I (213 aa).

4Fe-4S ferredoxin-type domains follow at residues 74–103 and 113–142; these read RFIE…METS and ENYS…HGTE. Residues Cys83, Cys86, Cys89, Cys93, Cys122, Cys125, Cys128, and Cys132 each contribute to the [4Fe-4S] cluster site.

The protein belongs to the complex I 23 kDa subunit family. In terms of assembly, NDH-1 is composed of 14 different subunits. Subunits NuoA, H, J, K, L, M, N constitute the membrane sector of the complex. Requires [4Fe-4S] cluster as cofactor.

It localises to the cell inner membrane. The enzyme catalyses a quinone + NADH + 5 H(+)(in) = a quinol + NAD(+) + 4 H(+)(out). Functionally, NDH-1 shuttles electrons from NADH, via FMN and iron-sulfur (Fe-S) centers, to quinones in the respiratory chain. The immediate electron acceptor for the enzyme in this species is believed to be ubiquinone. Couples the redox reaction to proton translocation (for every two electrons transferred, four hydrogen ions are translocated across the cytoplasmic membrane), and thus conserves the redox energy in a proton gradient. This is NADH-quinone oxidoreductase subunit I from Campylobacter jejuni subsp. jejuni serotype O:23/36 (strain 81-176).